Consider the following 207-residue polypeptide: dTTP/UTP pyrophosphatase (207 aa).

Asp87 serves as the catalytic Proton acceptor.

It belongs to the Maf family. YhdE subfamily. A divalent metal cation is required as a cofactor.

The protein localises to the cytoplasm. The enzyme catalyses dTTP + H2O = dTMP + diphosphate + H(+). It catalyses the reaction UTP + H2O = UMP + diphosphate + H(+). Nucleoside triphosphate pyrophosphatase that hydrolyzes dTTP and UTP. May have a dual role in cell division arrest and in preventing the incorporation of modified nucleotides into cellular nucleic acids. This chain is dTTP/UTP pyrophosphatase, found in Bordetella pertussis (strain Tohama I / ATCC BAA-589 / NCTC 13251).